A 37-amino-acid polypeptide reads, in one-letter code: Large ribosomal subunit protein bL36 (37 aa).

The protein belongs to the bacterial ribosomal protein bL36 family.

The chain is Large ribosomal subunit protein bL36 from Alkaliphilus metalliredigens (strain QYMF).